We begin with the raw amino-acid sequence, 788 residues long: Cadherin-10 (788 aa).

The first 22 residues, 1–22 (MTIYQFLRLFVLWACLPHFCCP), serve as a signal peptide directing secretion. A propeptide spanning residues 23 to 54 (ELTFRRTPGIQQMTAESRAPRSDGKILHRQKR) is cleaved from the precursor. The Extracellular segment spans residues 23 to 613 (ELTFRRTPGI…LLPAGLSTGA (591 aa)). Cadherin domains lie at 56-160 (WMWN…EPTF), 161-269 (PEEI…PPRF), 270-384 (PQNT…PPVF), 385-489 (SRSS…APQF), and 489-603 (FAVF…AEAL). N256 carries an N-linked (GlcNAc...) asparagine glycan. N456 and N534 each carry an N-linked (GlcNAc...) asparagine glycan. The chain crosses the membrane as a helical span at residues 614 to 634 (LIAILLCIIILLVIVVLFAAL). The Cytoplasmic portion of the chain corresponds to 635 to 788 (KRQRKKEPLI…YGGGESDKDA (154 aa)). Residue S784 is modified to Phosphoserine.

The protein localises to the cell membrane. Cadherins are calcium-dependent cell adhesion proteins. They preferentially interact with themselves in a homophilic manner in connecting cells; cadherins may thus contribute to the sorting of heterogeneous cell types. This chain is Cadherin-10 (Cdh10), found in Mus musculus (Mouse).